The primary structure comprises 508 residues: GATA zinc finger domain-containing protein 13 (508 aa).

Disordered stretches follow at residues 20-51 and 203-296; these read YSKNNNNNNNNNNNNNINNNNNNNNNNNINNN and MSII…PEIE. The segment covering 23-51 has biased composition (low complexity); that stretch reads NNNNNNNNNNNNNINNNNNNNNNNNINNN. Positions 203–224 are enriched in polar residues; sequence MSIIPSDNFPTPQLPLETNTDL. Positions 225–247 are enriched in low complexity; the sequence is NNTSDCSSTTFSSPPSSAFNSPN. The span at 248–266 shows a compositional bias: polar residues; the sequence is LQNDYTQPQNQKSQSSTIV. Positions 269 to 279 are enriched in basic residues; sequence NSSKSKSKNNK. A GATA-type zinc finger spans residues 327-354; it reads CSICKIKCSIYWRRILINEVRTSVCNAC. Residues 356-433 are a coiled coil; that stretch reads LRTMKKTKKE…NNNNNNNNNN (78 aa). The segment covering 399–482 has biased composition (low complexity); it reads TTTTTTTTTS…NNNNNDNYND (84 aa). The tract at residues 399-484 is disordered; it reads TTTTTTTTTS…NNNDNYNDSI (86 aa).

The chain is GATA zinc finger domain-containing protein 13 (gtaM) from Dictyostelium discoideum (Social amoeba).